The following is a 37-amino-acid chain: ACVGDGQRCASWSGPYCCDGYYCSCRSMPYCRCRNNS.

4 cysteine pairs are disulfide-bonded: Cys-2–Cys-18, Cys-9–Cys-23, Cys-17–Cys-33, and Cys-25–Cys-31. Position 37 is a serine amide (Ser-37).

This sequence belongs to the neurotoxin 07 (Beta/delta-agtx) family. 02 (aga-3) subfamily. Expressed by the venom gland.

It localises to the secreted. Functionally, insecticidal toxin. Binds to site 4 of insect voltage-gated sodium channel (Nav) and inhibits channel inactivation. In vivo, it lethal to lepidopteran larvae. Has no adverse affects when intracerebroventricularly injected in mice at a dose of 0.2 ug, but causes reversible paralysis of legs when injected intracerebroventricularly in mice at a dose of 2.0 ug. The polypeptide is Delta-amaurobitoxin-Pl1b (Pireneitega luctuosa (Tangled nest spider)).